The sequence spans 244 residues: Ethylene-responsive transcription factor ERF013 (244 aa).

The disordered stretch occupies residues 1-33 (MVKQELKIQVTTSSSSLSHSSSSSSSSTSALRH). Residues 11-29 (TTSSSSLSHSSSSSSSSTS) show a composition bias toward low complexity. Positions 42 to 99 (KYKGVRMRSWGSWVTEIRAPNQKTRIWLGSYSTAEAAARAYDAALLCLKGPKANLNFP) form a DNA-binding region, AP2/ERF. The interval 123-178 (QKVAAQAANSSSDHFTPPSDENDHDHDDGLDHHPSASSSAASSPPDDDHHNDDDGD) is disordered. The segment covering 143 to 156 (ENDHDHDDGLDHHP) has biased composition (basic and acidic residues). A compositionally biased stretch (low complexity) spans 157 to 166 (SASSSAASSP).

It belongs to the AP2/ERF transcription factor family. ERF subfamily.

Its subcellular location is the nucleus. In terms of biological role, probably acts as a transcriptional activator. Binds to the GCC-box pathogenesis-related promoter element. May be involved in the regulation of gene expression by stress factors and by components of stress signal transduction pathways. In Arabidopsis thaliana (Mouse-ear cress), this protein is Ethylene-responsive transcription factor ERF013 (ERF013).